The sequence spans 226 residues: Ras-related protein Rab11A (226 aa).

GTP contacts are provided by residues 24–32 (GDSAVGKSQ), 43–49 (SLDSKST), 72–76 (DTAGQ), 130–133 (NKCD), and 160–162 (SAL). The short motif at 46 to 54 (SKSTIGVEF) is the Effector region element. S-geranylgeranyl cysteine attachment occurs at residues C222 and C223. C223 is subject to Cysteine methyl ester. Residues 224-226 (QAS) constitute a propeptide, removed in mature form.

Belongs to the small GTPase superfamily. Rab family.

It localises to the cell membrane. The polypeptide is Ras-related protein Rab11A (RAB11A) (Lotus japonicus (Lotus corniculatus var. japonicus)).